Here is a 426-residue protein sequence, read N- to C-terminus: Synaptotagmin-13 (426 aa).

Residues 1–6 lie on the Vesicular side of the membrane; sequence MVLSVP. The helical transmembrane segment at 7-29 threads the bilayer; that stretch reads VIALGATLGTATSILALCGVTCL. Residues 30–426 lie on the Cytoplasmic side of the membrane; that stretch reads CRHMHPKKGL…QIAMWHQLHL (397 aa). C2 domains follow at residues 158-275 and 287-422; these read QAPK…AQWG and GTGE…AMWH.

It belongs to the synaptotagmin family. As to quaternary structure, interacts with NRXN1. In terms of tissue distribution, expressed in brain, spleen, kidney and testis.

Its subcellular location is the membrane. Its function is as follows. May be involved in transport vesicle docking to the plasma membrane. The sequence is that of Synaptotagmin-13 (Syt13) from Rattus norvegicus (Rat).